The following is a 336-amino-acid chain: Nuclear envelope-associated protein 1 (336 aa).

Residues cysteine 125–lysine 261 adopt a coiled-coil conformation. The Bipartite nuclear localization signal motif lies at lysine 240–lysine 261. The helical transmembrane segment at phenylalanine 313 to leucine 330 threads the bilayer.

As to quaternary structure, forms heteromers with NEAP2 and NEAP3. Interacts with SUN1; SUN2 and bZIP18.

Its subcellular location is the nucleus inner membrane. The protein localises to the nucleus. The protein resides in the nucleoplasm. In Arabidopsis thaliana (Mouse-ear cress), this protein is Nuclear envelope-associated protein 1.